The following is a 289-amino-acid chain: MNLLTKERGLAYVQLARIDKPIGTLLLLWPTLWALWLAAGGLPDLWTLLVFVVGVFLMRSAGCVINDYADRNFDGHVKRTAGRPLPMGKVKPREVLALFAVLALISFALVLTMNSLTIALSFAALLLAVCYPFMKRYIPIPQLVLGMAFSWSIPMAYAAQANALPLVAWLVFLANLLWTIAYDTQYAMVDRDDDLKLGLKSSAILFGRHDKRIIGVLQLATLLILLAVGQLMGLGAWYYWGLLGAAALFVYQQRLIRERQREACFQAFLNNNYAGALVFIGLVLNYLLP.

Helical transmembrane passes span 21 to 40 (PIGTLLLLWPTLWALWLAAG), 95 to 115 (VLALFAVLALISFALVLTMNS), 116 to 136 (LTIALSFAALLLAVCYPFMKR), 138 to 158 (IPIPQLVLGMAFSWSIPMAYA), 161 to 181 (ANALPLVAWLVFLANLLWTIA), 213 to 233 (IIGVLQLATLLILLAVGQLMG), 236 to 256 (AWYYWGLLGAAALFVYQQRLI), and 268 to 288 (FLNNNYAGALVFIGLVLNYLL).

It belongs to the UbiA prenyltransferase family. Mg(2+) is required as a cofactor.

The protein localises to the cell inner membrane. The enzyme catalyses all-trans-octaprenyl diphosphate + 4-hydroxybenzoate = 4-hydroxy-3-(all-trans-octaprenyl)benzoate + diphosphate. It functions in the pathway cofactor biosynthesis; ubiquinone biosynthesis. Its function is as follows. Catalyzes the prenylation of para-hydroxybenzoate (PHB) with an all-trans polyprenyl group. Mediates the second step in the final reaction sequence of ubiquinone-8 (UQ-8) biosynthesis, which is the condensation of the polyisoprenoid side chain with PHB, generating the first membrane-bound Q intermediate 3-octaprenyl-4-hydroxybenzoate. This chain is 4-hydroxybenzoate octaprenyltransferase, found in Aeromonas salmonicida (strain A449).